The sequence spans 115 residues: Salivary anti-complement protein (115 aa).

Positions 1–22 (MKFFYLIFSAIFFLADPALVKC) are cleaved as a signal peptide. 3 disulfides stabilise this stretch: cysteine 26–cysteine 108, cysteine 41–cysteine 92, and cysteine 83–cysteine 101.

May form multimers. In terms of tissue distribution, salivary gland (at protein level).

It localises to the secreted. Salivary protein that inhibits the classical pathway of complement system activation in the host while having no inhibitory effect on the alternative or lectin pathways. Prevent cleavage of host C4 and consequently impairs the activation of factors downstream of C4b in the complement cascade. This chain is Salivary anti-complement protein, found in Lutzomyia longipalpis (Sand fly).